Here is a 579-residue protein sequence, read N- to C-terminus: Insulin-like growth factor 2 mRNA-binding protein 3 (579 aa).

RRM domains lie at 2–75 and 81–156; these read NKLY…HSVP and RKLQ…YIPD. The disordered stretch occupies residues 160–192; sequence AQQNPLQQPRGRRGLGQRGSSRQGSPGSVSKQK. Positions 177–187 are enriched in low complexity; that stretch reads RGSSRQGSPGS. Residue Ser184 is modified to Phosphoserine. KH domains follow at residues 195–260, 276–343, and 405–470; these read DLPL…CKSI, EIPL…EEEI, and TETV…QGRI. Residues Lys450 and Lys475 each participate in a glycyl lysine isopeptide (Lys-Gly) (interchain with G-Cter in SUMO2) cross-link. The 67-residue stretch at 487-553 folds into the KH 4 domain; the sequence is KLEAHIRVPS…YACQVAQRKI (67 aa). Position 528 is a phosphothreonine (Thr528).

This sequence belongs to the RRM IMP/VICKZ family. In terms of assembly, can form homooligomers and heterooligomers with IGF2BP1 and IGF2BP3 in an RNA-dependent manner. Interacts with IGF2BP1. Interacts with ELAVL1, DHX9, HNRNPU, MATR3 and PABPC1. As to expression, expressed in fetal liver, fetal lung, fetal kidney, fetal thymus, fetal placenta, fetal follicles of ovary and gonocytes of testis, growing oocytes, spermatogonia and semen (at protein level). Expressed in cervix adenocarcinoma, in testicular, pancreatic and renal-cell carcinomas (at protein level). Expressed ubiquitously during fetal development at 8 and 14 weeks of gestation. Expressed in ovary, testis, brain, placenta, pancreatic cancer tissues and pancreatic cancer cell lines.

The protein localises to the nucleus. It is found in the cytoplasm. Its subcellular location is the P-body. It localises to the stress granule. Its function is as follows. RNA-binding factor that may recruit target transcripts to cytoplasmic protein-RNA complexes (mRNPs). This transcript 'caging' into mRNPs allows mRNA transport and transient storage. It also modulates the rate and location at which target transcripts encounter the translational apparatus and shields them from endonuclease attacks or microRNA-mediated degradation. Preferentially binds to N6-methyladenosine (m6A)-containing mRNAs and increases their stability. Binds to the 3'-UTR of CD44 mRNA and stabilizes it, hence promotes cell adhesion and invadopodia formation in cancer cells. Binds to beta-actin/ACTB and MYC transcripts. Increases MYC mRNA stability by binding to the coding region instability determinant (CRD) and binding is enhanced by m6A-modification of the CRD. Binds to the 5'-UTR of the insulin-like growth factor 2 (IGF2) mRNAs. The polypeptide is Insulin-like growth factor 2 mRNA-binding protein 3 (IGF2BP3) (Homo sapiens (Human)).